The following is a 130-amino-acid chain: Small ribosomal subunit protein uS11 (130 aa).

This sequence belongs to the universal ribosomal protein uS11 family. In terms of assembly, part of the 30S ribosomal subunit. Interacts with proteins S7 and S18. Binds to IF-3.

Located on the platform of the 30S subunit, it bridges several disparate RNA helices of the 16S rRNA. Forms part of the Shine-Dalgarno cleft in the 70S ribosome. This is Small ribosomal subunit protein uS11 from Xylella fastidiosa (strain 9a5c).